The sequence spans 409 residues: Astacin-like metalloendopeptidase (409 aa).

A signal peptide spans 1–19 (MDLKMLLIFTAFLLPAVLG). Positions 20–86 (FPIQDNYENS…EGDIVPRRSR (67 aa)) are excised as a propeptide. Low complexity predominate over residues 30–42 (TATSESTQVTTEE). The tract at residues 30 to 55 (TATSESTQVTTEESIYDSPSPTETDS) is disordered. The region spanning 87–285 (SAFNCRNCYW…AKINKLYNCS (199 aa)) is the Peptidase M12A domain. Cystine bridges form between cysteine 91-cysteine 94, cysteine 134-cysteine 284, cysteine 155-cysteine 175, cysteine 287-cysteine 313, and cysteine 339-cysteine 362. Histidine 183 serves as a coordination point for Zn(2+). Residue glutamate 184 is part of the active site. Residues histidine 187 and histidine 193 each contribute to the Zn(2+) site. The region spanning 287–399 (CSTIIDAAFG…SGFQATFTSA (113 aa)) is the CUB domain.

The cofactor is Zn(2+).

Its subcellular location is the cytoplasm. It localises to the cell membrane. The protein localises to the cytoplasmic vesicle. The protein resides in the secretory vesicle. It is found in the cortical granule. Probable oocyte-specific oolemmal receptor involved in sperm and egg adhesion and fertilization. Protease which may play a role in the breaking down of the vitelline membrane (days 0-5) and possibly, in the digestion of the egg white (days 9-12). This Coturnix japonica (Japanese quail) protein is Astacin-like metalloendopeptidase.